Reading from the N-terminus, the 429-residue chain is Glutamate-1-semialdehyde 2,1-aminomutase (429 aa).

Lysine 267 carries the N6-(pyridoxal phosphate)lysine modification.

This sequence belongs to the class-III pyridoxal-phosphate-dependent aminotransferase family. HemL subfamily. In terms of assembly, homodimer. Requires pyridoxal 5'-phosphate as cofactor.

It localises to the cytoplasm. It catalyses the reaction (S)-4-amino-5-oxopentanoate = 5-aminolevulinate. The protein operates within porphyrin-containing compound metabolism; protoporphyrin-IX biosynthesis; 5-aminolevulinate from L-glutamyl-tRNA(Glu): step 2/2. This chain is Glutamate-1-semialdehyde 2,1-aminomutase, found in Stenotrophomonas maltophilia (strain K279a).